We begin with the raw amino-acid sequence, 70 residues long: Gas vesicle protein A (70 aa).

This sequence belongs to the gas vesicle GvpA family. The gas vesicle shell is 2 nm thick and consists of a single layer of this protein. It forms helical ribs nearly perpendicular to the long axis of the vesicle.

It is found in the gas vesicle shell. Its function is as follows. Gas vesicles are hollow, gas filled proteinaceous nanostructures found in some microorganisms. During planktonic growth they allow positioning of the organism at a favorable depth for light or nutrient acquisition. GvpA forms the protein shell. This is Gas vesicle protein A from Cereibacter sphaeroides (strain ATCC 17023 / DSM 158 / JCM 6121 / CCUG 31486 / LMG 2827 / NBRC 12203 / NCIMB 8253 / ATH 2.4.1.) (Rhodobacter sphaeroides).